The sequence spans 185 residues: Ribosome-recycling factor (185 aa).

The protein belongs to the RRF family.

The protein resides in the cytoplasm. Responsible for the release of ribosomes from messenger RNA at the termination of protein biosynthesis. May increase the efficiency of translation by recycling ribosomes from one round of translation to another. The chain is Ribosome-recycling factor from Geobacter sulfurreducens (strain ATCC 51573 / DSM 12127 / PCA).